The chain runs to 195 residues: Imidazoleglycerol-phosphate dehydratase (195 aa).

This sequence belongs to the imidazoleglycerol-phosphate dehydratase family.

The protein localises to the cytoplasm. The catalysed reaction is D-erythro-1-(imidazol-4-yl)glycerol 3-phosphate = 3-(imidazol-4-yl)-2-oxopropyl phosphate + H2O. It functions in the pathway amino-acid biosynthesis; L-histidine biosynthesis; L-histidine from 5-phospho-alpha-D-ribose 1-diphosphate: step 6/9. The chain is Imidazoleglycerol-phosphate dehydratase from Cupriavidus metallidurans (strain ATCC 43123 / DSM 2839 / NBRC 102507 / CH34) (Ralstonia metallidurans).